The sequence spans 98 residues: Large ribosomal subunit protein uL23 (98 aa).

It belongs to the universal ribosomal protein uL23 family. As to quaternary structure, part of the 50S ribosomal subunit. Contacts protein L29, and trigger factor when it is bound to the ribosome.

Functionally, one of the early assembly proteins it binds 23S rRNA. One of the proteins that surrounds the polypeptide exit tunnel on the outside of the ribosome. Forms the main docking site for trigger factor binding to the ribosome. In Caulobacter sp. (strain K31), this protein is Large ribosomal subunit protein uL23.